Here is a 100-residue protein sequence, read N- to C-terminus: Small ribosomal subunit protein uS14c (100 aa).

The protein belongs to the universal ribosomal protein uS14 family. Part of the 30S ribosomal subunit.

The protein localises to the plastid. Its subcellular location is the chloroplast. Binds 16S rRNA, required for the assembly of 30S particles. This Aethionema grandiflorum (Persian stone-cress) protein is Small ribosomal subunit protein uS14c.